We begin with the raw amino-acid sequence, 240 residues long: Pyridoxine 5'-phosphate synthase (240 aa).

Residue N7 coordinates 3-amino-2-oxopropyl phosphate. 9–10 (DH) is a 1-deoxy-D-xylulose 5-phosphate binding site. R18 is a 3-amino-2-oxopropyl phosphate binding site. H43 acts as the Proton acceptor in catalysis. 1-deoxy-D-xylulose 5-phosphate-binding residues include R45 and H50. The Proton acceptor role is filled by E70. A 1-deoxy-D-xylulose 5-phosphate-binding site is contributed by T100. H191 functions as the Proton donor in the catalytic mechanism. 3-amino-2-oxopropyl phosphate is bound by residues G192 and 213–214 (GH).

This sequence belongs to the PNP synthase family. As to quaternary structure, homooctamer; tetramer of dimers.

It is found in the cytoplasm. The catalysed reaction is 3-amino-2-oxopropyl phosphate + 1-deoxy-D-xylulose 5-phosphate = pyridoxine 5'-phosphate + phosphate + 2 H2O + H(+). Its pathway is cofactor biosynthesis; pyridoxine 5'-phosphate biosynthesis; pyridoxine 5'-phosphate from D-erythrose 4-phosphate: step 5/5. In terms of biological role, catalyzes the complicated ring closure reaction between the two acyclic compounds 1-deoxy-D-xylulose-5-phosphate (DXP) and 3-amino-2-oxopropyl phosphate (1-amino-acetone-3-phosphate or AAP) to form pyridoxine 5'-phosphate (PNP) and inorganic phosphate. This is Pyridoxine 5'-phosphate synthase from Crocosphaera subtropica (strain ATCC 51142 / BH68) (Cyanothece sp. (strain ATCC 51142)).